Here is a 62-residue protein sequence, read N- to C-terminus: UPF0434 protein BP2767 (62 aa).

Belongs to the UPF0434 family.

The sequence is that of UPF0434 protein BP2767 from Bordetella pertussis (strain Tohama I / ATCC BAA-589 / NCTC 13251).